A 397-amino-acid chain; its full sequence is Teichoic acid D-alanine hydrolase (397 aa).

The signal sequence occupies residues 1–23 (MKFNKVKLVIHACVLLFIIISIA).

Its subcellular location is the cell membrane. The catalysed reaction is [(4-D-Ala)-(2-GlcNAc)-Rib-ol-P]n-[Gro-P]m-beta-D-ManNAc-(1-&gt;4)-alpha-D-GlcNAc-P-peptidoglycan + n H2O = [(2-GlcNAc)-Rib-ol-P]n-[Gro-P]m-beta-D-ManNAc-(1-&gt;4)-alpha-D-GlcNAc-P-peptidoglycan + n D-alanine.. Catalyzes the liberation of D-alanyl moieties present on wall teichoic acid (WTA) and lipoteichoic acid (LTA). Affects the methicillin resistance level and autolysis in the presence of Triton X-100 as well as the cell wall structure. In Staphylococcus aureus (strain Mu50 / ATCC 700699), this protein is Teichoic acid D-alanine hydrolase (fmtA).